The following is an 85-amino-acid chain: Large ribosomal subunit protein bL27 (85 aa).

Residues methionine 1 to leucine 21 form a disordered region.

Belongs to the bacterial ribosomal protein bL27 family.

The sequence is that of Large ribosomal subunit protein bL27 from Chromohalobacter salexigens (strain ATCC BAA-138 / DSM 3043 / CIP 106854 / NCIMB 13768 / 1H11).